The following is a 131-amino-acid chain: Small ribosomal subunit protein uS8 (131 aa).

Belongs to the universal ribosomal protein uS8 family. Part of the 30S ribosomal subunit. Contacts proteins S5 and S12.

In terms of biological role, one of the primary rRNA binding proteins, it binds directly to 16S rRNA central domain where it helps coordinate assembly of the platform of the 30S subunit. The chain is Small ribosomal subunit protein uS8 from Sorangium cellulosum (strain So ce56) (Polyangium cellulosum (strain So ce56)).